The following is a 117-amino-acid chain: Ribosome-binding factor A (117 aa).

Belongs to the RbfA family. As to quaternary structure, monomer. Binds 30S ribosomal subunits, but not 50S ribosomal subunits or 70S ribosomes.

It localises to the cytoplasm. One of several proteins that assist in the late maturation steps of the functional core of the 30S ribosomal subunit. Associates with free 30S ribosomal subunits (but not with 30S subunits that are part of 70S ribosomes or polysomes). Required for efficient processing of 16S rRNA. May interact with the 5'-terminal helix region of 16S rRNA. In Bacillus licheniformis (strain ATCC 14580 / DSM 13 / JCM 2505 / CCUG 7422 / NBRC 12200 / NCIMB 9375 / NCTC 10341 / NRRL NRS-1264 / Gibson 46), this protein is Ribosome-binding factor A.